A 319-amino-acid chain; its full sequence is RNA polymerase II holoenzyme cyclin-like subunit (319 aa).

In terms of domain architecture, Cyclin N-terminal spans 53 to 142 (QQLIRLAKRL…LGECEFFMIS (90 aa)). The span at 237–251 (QGQQAQGGMPEPAAA) shows a compositional bias: low complexity. A disordered region spans residues 237–261 (QGQQAQGGMPEPAAAEPKEKRQQDR). Residues 252–261 (EPKEKRQQDR) are compositionally biased toward basic and acidic residues.

It belongs to the cyclin family. Cyclin C subfamily. As to quaternary structure, component of the SRB8-11 complex, a regulatory module of the Mediator complex. Interacts with SSN3/FCK1.

The protein resides in the nucleus. In terms of biological role, component of the SRB8-11 complex. The SRB8-11 complex is a regulatory module of the Mediator complex which is itself involved in regulation of basal and activated RNA polymerase II-dependent transcription. The SRB8-11 complex may be involved in the transcriptional repression of a subset of genes regulated by Mediator. It may inhibit the association of the Mediator complex with RNA polymerase II to form the holoenzyme complex. The SRB8-11 complex phosphorylates the C-terminal domain (CTD) of the largest subunit of RNA polymerase II. May play a role in signal transduction pathways regulating secondary metabolism and fungal development (conidiation). This chain is RNA polymerase II holoenzyme cyclin-like subunit (SSN8), found in Gibberella moniliformis (Maize ear and stalk rot fungus).